Reading from the N-terminus, the 264-residue chain is Diphthine synthase (264 aa).

Residues Leu-10, Asp-87, Val-90, 115-116 (SI), Leu-166, Ala-209, and His-234 contribute to the S-adenosyl-L-methionine site.

This sequence belongs to the diphthine synthase family. In terms of assembly, homodimer.

The catalysed reaction is 2-[(3S)-amino-3-carboxypropyl]-L-histidyl-[translation elongation factor 2] + 3 S-adenosyl-L-methionine = diphthine-[translation elongation factor 2] + 3 S-adenosyl-L-homocysteine + 3 H(+). Its pathway is protein modification; peptidyl-diphthamide biosynthesis. In terms of biological role, S-adenosyl-L-methionine-dependent methyltransferase that catalyzes the trimethylation of the amino group of the modified target histidine residue in translation elongation factor 2 (EF-2), to form an intermediate called diphthine. The three successive methylation reactions represent the second step of diphthamide biosynthesis. This Thermococcus kodakarensis (strain ATCC BAA-918 / JCM 12380 / KOD1) (Pyrococcus kodakaraensis (strain KOD1)) protein is Diphthine synthase.